The following is a 238-amino-acid chain: Ubiquinone biosynthesis O-methyltransferase (238 aa).

Residues Arg-39, Gly-59, Asp-80, and Met-124 each contribute to the S-adenosyl-L-methionine site.

Belongs to the methyltransferase superfamily. UbiG/COQ3 family.

The catalysed reaction is a 3-demethylubiquinol + S-adenosyl-L-methionine = a ubiquinol + S-adenosyl-L-homocysteine + H(+). It carries out the reaction a 3-(all-trans-polyprenyl)benzene-1,2-diol + S-adenosyl-L-methionine = a 2-methoxy-6-(all-trans-polyprenyl)phenol + S-adenosyl-L-homocysteine + H(+). It functions in the pathway cofactor biosynthesis; ubiquinone biosynthesis. Its function is as follows. O-methyltransferase that catalyzes the 2 O-methylation steps in the ubiquinone biosynthetic pathway. This Aeromonas salmonicida (strain A449) protein is Ubiquinone biosynthesis O-methyltransferase.